Here is an 89-residue protein sequence, read N- to C-terminus: Large ribosomal subunit protein bL27 (89 aa).

Residues 1–24 (MAHKKGTGSTRNGRDSRSQRLGVK) form a disordered region.

It belongs to the bacterial ribosomal protein bL27 family.

This chain is Large ribosomal subunit protein bL27, found in Microcystis aeruginosa (strain NIES-843 / IAM M-2473).